A 260-amino-acid chain; its full sequence is Tropinone reductase 2 (260 aa).

An NADP(+)-binding site is contributed by 13-37; sequence LVTGGSRGIGYGIVEELANLGASVY. Serine 146 contacts substrate. Tyrosine 159 acts as the Proton acceptor in catalysis.

Belongs to the short-chain dehydrogenases/reductases (SDR) family.

The catalysed reaction is pseudotropine + NADP(+) = tropinone + NADPH + H(+). The protein operates within alkaloid biosynthesis; tropane alkaloid biosynthesis. Its function is as follows. Catalyzes the stereospecific reduction of tropinone to pseudotropine. The sequence is that of Tropinone reductase 2 (TR2) from Hyoscyamus niger (Black henbane).